A 393-amino-acid polypeptide reads, in one-letter code: Methylthioribose kinase (393 aa).

ATP is bound by residues asparagine 38, lysine 53, and 107–109 (EDL). Aspartate 225 provides a ligand contact to substrate. Position 242 to 244 (242 to 244 (DPE)) interacts with ATP. Residue arginine 332 coordinates substrate.

It belongs to the methylthioribose kinase family. As to quaternary structure, homodimer.

It carries out the reaction 5-(methylsulfanyl)-D-ribose + ATP = 5-(methylsulfanyl)-alpha-D-ribose 1-phosphate + ADP + H(+). The protein operates within amino-acid biosynthesis; L-methionine biosynthesis via salvage pathway; S-methyl-5-thio-alpha-D-ribose 1-phosphate from S-methyl-5'-thioadenosine (hydrolase route): step 2/2. In terms of biological role, catalyzes the phosphorylation of methylthioribose into methylthioribose-1-phosphate. In Bacillus anthracis (strain A0248), this protein is Methylthioribose kinase.